We begin with the raw amino-acid sequence, 468 residues long: Citrate synthase, mitochondrial (468 aa).

The N-terminal 30 residues, 1–30 (MSFLSISRLAPRLLSSKNAACVVVAARNAS), are a transit peptide targeting the mitochondrion. Residues histidine 303 and histidine 349 contribute to the active site. Arginine 358 is an oxaloacetate binding site. Aspartate 404 is a catalytic residue. Residues arginine 430 and arginine 450 each coordinate oxaloacetate.

Belongs to the citrate synthase family. As to quaternary structure, homodimer.

Its subcellular location is the mitochondrion matrix. The enzyme catalyses oxaloacetate + acetyl-CoA + H2O = citrate + CoA + H(+). It participates in carbohydrate metabolism; tricarboxylic acid cycle; isocitrate from oxaloacetate: step 1/2. Key enzyme of the Krebs tricarboxylic acid cycle which catalyzes the synthesis of citrate from acetyl coenzyme A and oxaloacetate. This Danio rerio (Zebrafish) protein is Citrate synthase, mitochondrial (cs).